The primary structure comprises 734 residues: Photosystem I P700 chlorophyll a apoprotein A2 (734 aa).

Transmembrane regions (helical) follow at residues 46-69, 135-158, 175-199, 273-291, 330-353, 369-395, 417-439, and 517-535; these read IFAS…FHVA, LYTG…LHLQ, LNHH…HVAI, IAHH…GHMY, LHFQ…QHMY, AALY…IFFI, AIIS…LYVH, and FLVH…LILV. [4Fe-4S] cluster contacts are provided by Cys-559 and Cys-568. 2 helical membrane passes run 575–596 and 643–665; these read AFYL…YWHW and LSVW…MFLI. Positions 654, 662, and 670 each coordinate chlorophyll a. Trp-671 lines the phylloquinone pocket. The chain crosses the membrane as a helical span at residues 707 to 727; it reads LVGLAHFSVGYIFTYAAFLIA.

It belongs to the PsaA/PsaB family. The PsaA/B heterodimer binds the P700 chlorophyll special pair and subsequent electron acceptors. PSI consists of a core antenna complex that captures photons, and an electron transfer chain that converts photonic excitation into a charge separation. The eukaryotic PSI reaction center is composed of at least 11 subunits. P700 is a chlorophyll a/chlorophyll a' dimer, A0 is one or more chlorophyll a, A1 is one or both phylloquinones and FX is a shared 4Fe-4S iron-sulfur center. serves as cofactor.

It is found in the plastid. Its subcellular location is the chloroplast thylakoid membrane. It catalyses the reaction reduced [plastocyanin] + hnu + oxidized [2Fe-2S]-[ferredoxin] = oxidized [plastocyanin] + reduced [2Fe-2S]-[ferredoxin]. Its function is as follows. PsaA and PsaB bind P700, the primary electron donor of photosystem I (PSI), as well as the electron acceptors A0, A1 and FX. PSI is a plastocyanin-ferredoxin oxidoreductase, converting photonic excitation into a charge separation, which transfers an electron from the donor P700 chlorophyll pair to the spectroscopically characterized acceptors A0, A1, FX, FA and FB in turn. Oxidized P700 is reduced on the lumenal side of the thylakoid membrane by plastocyanin. This chain is Photosystem I P700 chlorophyll a apoprotein A2, found in Zygnema circumcarinatum (Green alga).